We begin with the raw amino-acid sequence, 140 residues long: uncharacterized protein (140 aa).

The segment at 34–88 (PLRWRNRARNREKPHSPRAVSSPATHSLPPSNPCRLTPTLSSARPREGSCPSKCS) is disordered.

In terms of tissue distribution, expressed in a range of cell lines, including B-cell lymphoma and prostate.

This is an uncharacterized protein from Homo sapiens (Human).